The chain runs to 258 residues: Alpha- and beta-fibrinogenase stejnefibrase-1 (258 aa).

Residues 1-18 form the signal peptide; the sequence is MELIRVLANLLILQLSYA. A propeptide spanning residues 19–24 is cleaved from the precursor; that stretch reads QKSSEL. The Peptidase S1 domain occupies 25–249; that stretch reads IIGGDECNID…HLDWIQNIIA (225 aa). Disulfide bonds link cysteine 31–cysteine 163, cysteine 50–cysteine 66, cysteine 98–cysteine 256, cysteine 142–cysteine 210, cysteine 174–cysteine 189, and cysteine 200–cysteine 225. Histidine 65 functions as the Charge relay system in the catalytic mechanism. A glycan (N-linked (GlcNAc...) asparagine) is linked at asparagine 103. Aspartate 110 functions as the Charge relay system in the catalytic mechanism. N-linked (GlcNAc...) asparagine glycans are attached at residues asparagine 121, asparagine 122, asparagine 154, and asparagine 170. Serine 204 functions as the Charge relay system in the catalytic mechanism.

It belongs to the peptidase S1 family. Snake venom subfamily. As to quaternary structure, monomer. As to expression, expressed by the venom gland.

The protein localises to the secreted. Its activity is regulated as follows. Its activity is inhibited by PMSF and p-nitrophenyl-p-guanidinobenzoate (NPGB). Snake venom serine protease. Degrades concomitantly alpha- (FGA) and beta-chains of fibrinogen (FGB). This chain is Alpha- and beta-fibrinogenase stejnefibrase-1, found in Trimeresurus stejnegeri (Chinese green tree viper).